Consider the following 918-residue polypeptide: Serine/threonine-protein kinase D1 (918 aa).

Phosphotyrosine is present on Tyr93. The Phorbol-ester/DAG-type 1 zinc-finger motif lies at 144 to 194 (PHALFVHSYRAPAFCDHCGEMLWGLVRQGLKCEGCGLNYHKRCAFKIPNNC). Residues Ser203, Ser206, Ser217, and Ser221 each carry the phosphoserine modification. The Phorbol-ester/DAG-type 2 zinc-finger motif lies at 276 to 326 (PHTFVIHSYTRPTVCQFCKKLLKGLFRQGLQCKDCRFNCHKRCAPKVPNNC). 2 disordered regions span residues 338–362 (SPGA…NSGL) and 380–408 (EGQS…STSN). Acidic residues-rich tracts occupy residues 345–355 (VVMEEGSDDND) and 387–396 (EMQDPDADQE). Ser351 is subject to Phosphoserine. 2 positions are modified to phosphoserine; by MAPK13: Ser403 and Ser407. The 120-residue stretch at 428–547 (TVMKEGWMVH…WEVAIQHALM (120 aa)) folds into the PH domain. A Phosphotyrosine modification is found at Tyr438. Ser454 is modified (phosphoserine). Position 469 is a phosphotyrosine; by ABL (Tyr469). The residue at position 508 (Tyr508) is a Phosphotyrosine. Residue Ser554 is modified to Phosphoserine. The 257-residue stretch at 589 to 845 (IFPDEVLGSG…VDKTLSHPWL (257 aa)) folds into the Protein kinase domain. Residues 595–603 (LGSGQFGIV) and Lys618 contribute to the ATP site. Asp712 (proton acceptor) is an active-site residue. A Phosphoserine; by PKC/PRKCD modification is found at Ser744. At Ser748 the chain carries Phosphoserine; by autocatalysis and PKC/PRKCD. Tyr755 is modified (phosphotyrosine). A Phosphoserine; by autocatalysis modification is found at Ser916.

This sequence belongs to the protein kinase superfamily. CAMK Ser/Thr protein kinase family. PKD subfamily. In terms of assembly, interacts (via N-terminus) with ADAP1/CENTA1. Interacts with MAPK13. Interacts with DAPK1 in an oxidative stress-regulated manner. Interacts with USP28; the interaction induces phosphorylation of USP28 and activated KRAS-mediated stabilization of ZNF304. Interacts with AKAP13 (via C-terminal domain). Mg(2+) serves as cofactor. Phosphorylated at Ser-403 and Ser-407 by MAPK13 during regulation of insulin secretion in pancreatic beta cells. Phosphorylated by DAPK1. Phosphorylated at Tyr-93 and by ABL at Tyr-469, which primes the kinase in response to oxidative stress, and promotes a second step activating phosphorylation at Ser-744/Ser-748 by PKRD. Phosphorylated on Ser-916 upon S.enterica infection in macrophages.

The protein resides in the cytoplasm. It is found in the cell membrane. The protein localises to the golgi apparatus. Its subcellular location is the trans-Golgi network. It catalyses the reaction L-seryl-[protein] + ATP = O-phospho-L-seryl-[protein] + ADP + H(+). It carries out the reaction L-threonyl-[protein] + ATP = O-phospho-L-threonyl-[protein] + ADP + H(+). Activated by DAG and phorbol esters. Phorbol-ester/DAG-type domain 1 binds DAG with high affinity and appears to play the dominant role in mediating translocation to the cell membrane and trans-Golgi network. Phorbol-ester/DAG-type domain 2 binds phorbol ester with higher affinity. Autophosphorylation of Ser-748 and phosphorylation of Ser-744 by PKC relieves auto-inhibition by the PH domain. Phosphorylation on Tyr-469 by the SRC-ABL1 pathway in response to oxidative stress, is also required for activation. Activated by DAPK1 under oxidative stress. Serine/threonine-protein kinase that converts transient diacylglycerol (DAG) signals into prolonged physiological effects downstream of PKC, and is involved in the regulation of MAPK8/JNK1 and Ras signaling, Golgi membrane integrity and trafficking, cell survival through NF-kappa-B activation, cell migration, cell differentiation by mediating HDAC7 nuclear export, cell proliferation via MAPK1/3 (ERK1/2) signaling, and plays a role in cardiac hypertrophy, VEGFA-induced angiogenesis, genotoxic-induced apoptosis and flagellin-stimulated inflammatory response. Phosphorylates the epidermal growth factor receptor (EGFR) on dual threonine residues, which leads to the suppression of epidermal growth factor (EGF)-induced MAPK8/JNK1 activation and subsequent JUN phosphorylation. Phosphorylates RIN1, inducing RIN1 binding to 14-3-3 proteins YWHAB, YWHAE and YWHAZ and increased competition with RAF1 for binding to GTP-bound form of Ras proteins (NRAS, HRAS and KRAS). Acts downstream of the heterotrimeric G-protein beta/gamma-subunit complex to maintain the structural integrity of the Golgi membranes, and is required for protein transport along the secretory pathway. In the trans-Golgi network (TGN), regulates the fission of transport vesicles that are on their way to the plasma membrane. May act by activating the lipid kinase phosphatidylinositol 4-kinase beta (PI4KB) at the TGN for the local synthesis of phosphorylated inositol lipids, which induces a sequential production of DAG, phosphatidic acid (PA) and lyso-PA (LPA) that are necessary for membrane fission and generation of specific transport carriers to the cell surface. Under oxidative stress, is phosphorylated at Tyr-469 via SRC-ABL1 and contributes to cell survival by activating IKK complex and subsequent nuclear translocation and activation of NFKB1. Involved in cell migration by regulating integrin alpha-5/beta-3 recycling and promoting its recruitment in newly forming focal adhesion. In osteoblast differentiation, mediates the bone morphogenetic protein 2 (BMP2)-induced nuclear export of HDAC7, which results in the inhibition of HDAC7 transcriptional repression of RUNX2. In neurons, plays an important role in neuronal polarity by regulating the biogenesis of TGN-derived dendritic vesicles, and is involved in the maintenance of dendritic arborization and Golgi structure in hippocampal cells. May potentiate mitogenesis induced by the neuropeptide bombesin or vasopressin by mediating an increase in the duration of MAPK1/3 (ERK1/2) signaling, which leads to accumulation of immediate-early gene products including FOS that stimulate cell cycle progression. Plays an important role in the proliferative response induced by low calcium in keratinocytes, through sustained activation of MAPK1/3 (ERK1/2) pathway. Downstream of novel PKC signaling, plays a role in cardiac hypertrophy by phosphorylating HDAC5, which in turn triggers XPO1/CRM1-dependent nuclear export of HDAC5, MEF2A transcriptional activation and induction of downstream target genes that promote myocyte hypertrophy and pathological cardiac remodeling. Mediates cardiac troponin I (TNNI3) phosphorylation at the PKA sites, which results in reduced myofilament calcium sensitivity, and accelerated crossbridge cycling kinetics. The PRKD1-HDAC5 pathway is also involved in angiogenesis by mediating VEGFA-induced specific subset of gene expression, cell migration, and tube formation. In response to VEGFA, is necessary and required for HDAC7 phosphorylation which induces HDAC7 nuclear export and endothelial cell proliferation and migration. During apoptosis induced by cytarabine and other genotoxic agents, PRKD1 is cleaved by caspase-3 at Asp-378, resulting in activation of its kinase function and increased sensitivity of cells to the cytotoxic effects of genotoxic agents. In epithelial cells, is required for transducing flagellin-stimulated inflammatory responses by binding and phosphorylating TLR5, which contributes to MAPK14/p38 activation and production of inflammatory cytokines. Acts as an activator of NLRP3 inflammasome assembly by mediating phosphorylation of NLRP3. May play a role in inflammatory response by mediating activation of NF-kappa-B. May be involved in pain transmission by directly modulating TRPV1 receptor. Plays a role in activated KRAS-mediated stabilization of ZNF304 in colorectal cancer (CRC) cells. Regulates nuclear translocation of transcription factor TFEB in macrophages upon live S.enterica infection. This chain is Serine/threonine-protein kinase D1 (Prkd1), found in Rattus norvegicus (Rat).